Consider the following 234-residue polypeptide: Large ribosomal subunit protein uL1 (234 aa).

It belongs to the universal ribosomal protein uL1 family. In terms of assembly, part of the 50S ribosomal subunit.

In terms of biological role, binds directly to 23S rRNA. The L1 stalk is quite mobile in the ribosome, and is involved in E site tRNA release. Protein L1 is also a translational repressor protein, it controls the translation of the L11 operon by binding to its mRNA. In Helicobacter pylori (strain G27), this protein is Large ribosomal subunit protein uL1.